The primary structure comprises 75 residues: Putative membrane protein insertion efficiency factor 2 (75 aa).

Belongs to the UPF0161 family.

Its subcellular location is the cell membrane. Functionally, could be involved in insertion of integral membrane proteins into the membrane. The protein is Putative membrane protein insertion efficiency factor 2 of Bacillus licheniformis (strain ATCC 14580 / DSM 13 / JCM 2505 / CCUG 7422 / NBRC 12200 / NCIMB 9375 / NCTC 10341 / NRRL NRS-1264 / Gibson 46).